The chain runs to 385 residues: Flap endonuclease 1 (385 aa).

The N-domain stretch occupies residues 1 to 104; the sequence is MGILGLSKLI…GELAKRAERR (104 aa). D34 lines the Mg(2+) pocket. Positions 47 and 70 each coordinate DNA. D86, E158, E160, D179, and D181 together coordinate Mg(2+). The interval 122 to 253 is I-domain; the sequence is GIEKFNRRLV…KRAIELINTY (132 aa). DNA is bound at residue E158. Residues G231 and D233 each contribute to the DNA site. Position 233 (D233) interacts with Mg(2+). Residues 336–344 are interaction with PCNA; sequence TQVRLDSFF. Residues 346–385 form a disordered region; sequence TLPSTPNATNAAKRKAEEAKKSANNKKAKTSGGGRGRRPK. The segment covering 368-385 has biased composition (basic residues); sequence ANNKKAKTSGGGRGRRPK.

It belongs to the XPG/RAD2 endonuclease family. FEN1 subfamily. Interacts with PCNA. Three molecules of FEN1 bind to one PCNA trimer with each molecule binding to one PCNA monomer. PCNA stimulates the nuclease activity without altering cleavage specificity. It depends on Mg(2+) as a cofactor. Phosphorylated. Phosphorylation upon DNA damage induces relocalization to the nuclear plasma.

It localises to the nucleus. The protein localises to the nucleolus. Its subcellular location is the nucleoplasm. The protein resides in the mitochondrion. Functionally, structure-specific nuclease with 5'-flap endonuclease and 5'-3' exonuclease activities involved in DNA replication and repair. During DNA replication, cleaves the 5'-overhanging flap structure that is generated by displacement synthesis when DNA polymerase encounters the 5'-end of a downstream Okazaki fragment. It enters the flap from the 5'-end and then tracks to cleave the flap base, leaving a nick for ligation. Also involved in the long patch base excision repair (LP-BER) pathway, by cleaving within the apurinic/apyrimidinic (AP) site-terminated flap. Acts as a genome stabilization factor that prevents flaps from equilibrating into structures that lead to duplications and deletions. Also possesses 5'-3' exonuclease activity on nicked or gapped double-stranded DNA, and exhibits RNase H activity. Also involved in replication and repair of rDNA and in repairing mitochondrial DNA. In Drosophila simulans (Fruit fly), this protein is Flap endonuclease 1.